The following is a 580-amino-acid chain: MVDFRFEVKARDASGRIGKLTVNGKTVETPAIMPVINPKQLIVTPKELKEMGFGMIITNSYIIYKTPELREKALEVGIHKLLDYDGIIEVDSGSFQLMRYGGVEVTNREIVEFQHEIGVDIGTFLDIPTPPDAPREKAEEDLRITLERAKEAEEIKEIAMNAAVQGSTYPDLRTYAARELSRMNFEIHPIGAVVPLMESYRYRDLVDVVIASKVGLRPDRPVHLFGAGHPMIFALAVAMGIDLFDSASYALYAKDDRYMTPEGTKRLEELEYFPCSCPVCSRYTPQELREMPKEERTRLLAIHNLWVIREELNRVKQAIKEGELWRLVDERARSHPKLYAAYKRLLEYREYLEKNEPVTKASAFFKVSEEALRWPIVERARERAERVRSKFPETISHPIFGEIPKYLSLSYPFAQSEGEEDFTVEKPEKGEARKYVMAVAEYQFGEGAGEAFKDAFVELSRKTGMPRQIKAKGKHLATFRAEDGLLTLGIEGAKRLHEVLPFPRMRVVVDEDAEPFARRGKNVFAKFVVDADLNIRPYDEVLVVNRNDELLATGQTLLNGEELKIFQQGLAVKVRRGVEK.

The active-site Nucleophile is Asp-91. Asp-126 and Ala-192 together coordinate substrate. Residues Cys-275, Cys-277, and Cys-280 each coordinate Zn(2+). In terms of domain architecture, PUA spans 504 to 579; that stretch reads RMRVVVDEDA…LAVKVRRGVE (76 aa).

Belongs to the archaeosine tRNA-ribosyltransferase family. It depends on Zn(2+) as a cofactor.

It carries out the reaction guanosine(15) in tRNA + 7-cyano-7-deazaguanine = 7-cyano-7-carbaguanosine(15) in tRNA + guanine. It functions in the pathway tRNA modification; archaeosine-tRNA biosynthesis. Functionally, exchanges the guanine residue with 7-cyano-7-deazaguanine (preQ0) at position 15 in the dihydrouridine loop (D-loop) of archaeal tRNAs. This is tRNA-guanine(15) transglycosylase from Thermococcus kodakarensis (strain ATCC BAA-918 / JCM 12380 / KOD1) (Pyrococcus kodakaraensis (strain KOD1)).